The chain runs to 246 residues: MSAVTAAGYQAPQERSQSVTLPARPEPITLKPSETAVVVVDMQNAYSTEGGYVDLAGFDIAGAKGTIANIKKTLDAARAAGVQVIYFQNGWDKDYVEAGGPGSPNYHKSNALKTMRQRPELQGQLLAKGTWDYAIVDELQPQPGDILVPKTRYSGFFNTNMDSVLRARGIRNLVFVGIATNVCVESSLRDAFHLEYFGVMLEDATHHLGPDFIQQATVYNVEKFFGWVATVNDFCATVSQAAPTEA.

Positions 1-27 (MSAVTAAGYQAPQERSQSVTLPARPEP) are disordered. Asp-41 functions as the Proton acceptor in the catalytic mechanism. Lys-150 is an active-site residue. The active-site Nucleophile is the Cys-183.

This sequence belongs to the isochorismatase family. RutB subfamily.

The enzyme catalyses (Z)-3-ureidoacrylate + H2O + H(+) = (Z)-3-aminoacrylate + NH4(+) + CO2. It catalyses the reaction (Z)-3-ureidoacrylate + H2O = (Z)-3-aminoacrylate + carbamate + H(+). The catalysed reaction is (Z)-2-methylureidoacrylate + H2O + H(+) = (Z)-2-methylaminoacrylate + NH4(+) + CO2. Hydrolyzes ureidoacrylate to form aminoacrylate and carbamate. The carbamate hydrolyzes spontaneously, thereby releasing one of the nitrogen atoms of the pyrimidine ring as ammonia and one of its carbon atoms as CO2. This Rhizobium rhizogenes (strain K84 / ATCC BAA-868) (Agrobacterium radiobacter) protein is Ureidoacrylate amidohydrolase RutB.